We begin with the raw amino-acid sequence, 57 residues long: MKYFVVLVVLALILAITVDPSDAVFIDILDKMENAIHKAAQAGIGLAKPIENMILPK.

An N-terminal signal peptide occupies residues 1 to 23; sequence MKYFVVLVVLALILAITVDPSDA.

This sequence belongs to the andropin family. Ejaculatory duct of adult males.

It localises to the secreted. Male-specific peptide with moderate activity against Gram-positive bacteria. The protein is Andropin (Anp) of Drosophila sechellia (Fruit fly).